The chain runs to 28 residues: Omega-conotoxin-like CnVIIH (28 aa).

Intrachain disulfides connect C1-C16, C8-C20, and C15-C27. P7 bears the 4-hydroxyproline; partial mark. M12 is modified (methionine sulfoxide). C27 carries the cysteine amide modification.

It belongs to the conotoxin O1 superfamily. Expressed by the venom duct.

The protein localises to the secreted. Functionally, omega-conotoxins act at presynaptic membranes, they bind and block voltage-gated calcium channels (Cav). This toxin blocks N-type calcium channels (Cav2.2/CACNA1B) with high potency. Unexpectedly, it does not show any blocking activity at amphibian neuromuscular junction. In vivo, when intracerebroventricularly injected into mice causes shaking activity, and, at higher doses, causes mild tremors. When injected intramuscularly into fish, it causes paralysis, and, at higher doses, causes death. The sequence is that of Omega-conotoxin-like CnVIIH from Conus consors (Singed cone).